The following is a 276-amino-acid chain: NAD-capped RNA hydrolase NudC (276 aa).

Residue Arg82 coordinates substrate. Residues Cys112 and Cys115 each contribute to the Zn(2+) site. A substrate-binding site is contributed by Glu125. Zn(2+) contacts are provided by Cys130 and Cys133. Tyr138 contributes to the substrate binding site. In terms of domain architecture, Nudix hydrolase spans 139–262 (PRISPSMIVL…SIARYLIDLY (124 aa)). A divalent metal cation contacts are provided by Ala172, Glu188, and Glu192. Residues 173–194 (GFAEPGESAEDCLVREVREEVA) carry the Nudix box motif. Substrate is bound at residue 206–213 (QCWPFPHS). Glu233 lines the a divalent metal cation pocket. A substrate-binding site is contributed by Ala255.

This sequence belongs to the Nudix hydrolase family. NudC subfamily. In terms of assembly, homodimer. It depends on Mg(2+) as a cofactor. Requires Mn(2+) as cofactor. The cofactor is Zn(2+).

The enzyme catalyses a 5'-end NAD(+)-phospho-ribonucleoside in mRNA + H2O = a 5'-end phospho-adenosine-phospho-ribonucleoside in mRNA + beta-nicotinamide D-ribonucleotide + 2 H(+). It catalyses the reaction NAD(+) + H2O = beta-nicotinamide D-ribonucleotide + AMP + 2 H(+). It carries out the reaction NADH + H2O = reduced beta-nicotinamide D-ribonucleotide + AMP + 2 H(+). Functionally, mRNA decapping enzyme that specifically removes the nicotinamide adenine dinucleotide (NAD) cap from a subset of mRNAs by hydrolyzing the diphosphate linkage to produce nicotinamide mononucleotide (NMN) and 5' monophosphate mRNA. The NAD-cap is present at the 5'-end of some mRNAs and stabilizes RNA against 5'-processing. Has preference for mRNAs with a 5'-end purine. Catalyzes the hydrolysis of a broad range of dinucleotide pyrophosphates. The chain is NAD-capped RNA hydrolase NudC from Pseudomonas putida (strain W619).